A 758-amino-acid chain; its full sequence is RNA-directed RNA polymerase catalytic subunit (758 aa).

A disordered region spans residues 50–76 (SEKGKWTTNTETGAPQLNPIDGPLPED). Residues 55-64 (WTTNTETGAP) are compositionally biased toward polar residues. 2 consecutive short sequence motifs (nuclear localization signal) follow at residues 187–195 (RKRRVRDNM) and 203–216 (RTIG…NKRS). Residues 249 to 256 (RGFVYFVE) form a promoter-binding site region. Positions 286–483 (VRKMMTNSQD…GINMSKKKSY (198 aa)) constitute a RdRp catalytic domain.

Belongs to the influenza viruses polymerase PB1 family. As to quaternary structure, influenza RNA polymerase is composed of three subunits: PB1, PB2 and PA. Interacts (via N-terminus) with PA (via C-terminus). Interacts (via C-terminus) with PB2 (via N-terminus); this interaction is essential for transcription initiation. In terms of processing, phosphorylated by host PRKCA.

It localises to the host nucleus. Its subcellular location is the host cytoplasm. It carries out the reaction RNA(n) + a ribonucleoside 5'-triphosphate = RNA(n+1) + diphosphate. In terms of biological role, RNA-dependent RNA polymerase which is responsible for replication and transcription of virus RNA segments. The transcription of viral mRNAs occurs by a unique mechanism called cap-snatching. 5' methylated caps of cellular mRNAs are cleaved after 10-13 nucleotides by PA. In turn, these short capped RNAs are used as primers by PB1 for transcription of viral mRNAs. During virus replication, PB1 initiates RNA synthesis and copy vRNA into complementary RNA (cRNA) which in turn serves as a template for the production of more vRNAs. The polypeptide is RNA-directed RNA polymerase catalytic subunit (Aves (whales)).